Consider the following 347-residue polypeptide: Selenide, water dikinase (347 aa).

The active site involves Cys-17. Residues Lys-20 and 48 to 50 contribute to the ATP site; that span reads TRD. Mg(2+) is bound at residue Asp-51. ATP contacts are provided by residues Asp-68, Asp-91, and 139–141; that span reads GHS. Position 91 (Asp-91) interacts with Mg(2+). Residue Asp-227 participates in Mg(2+) binding.

It belongs to the selenophosphate synthase 1 family. Class I subfamily. As to quaternary structure, homodimer. Mg(2+) is required as a cofactor.

It catalyses the reaction hydrogenselenide + ATP + H2O = selenophosphate + AMP + phosphate + 2 H(+). Functionally, synthesizes selenophosphate from selenide and ATP. The chain is Selenide, water dikinase from Escherichia coli O9:H4 (strain HS).